Reading from the N-terminus, the 432-residue chain is MPNVVVVGAQWGDEGKGKIVDLLTQYADVVVRFQGGNNAGHTLVVGGEKTVLHLIPSGILHPGKSCVIGNGVVIDPEVLVLEIDRLKAKGALKDDGQLVVSLDAHVIMPWHKAIDVAREQAMGEGKIGTTGRGIGPTYEDKVARRGLRIRDLLDEARLARKVKERAALAREELARLGAKLELDEPALVKRYAELGRRVAGYATDVSIWLHRALQQGKSLLFEGAQGTMLDVDHGTYPFVTSSNTVAGNAVVGCGLGPTAVDYVLGISKAYSTRVGGGPYPTELKDETGERLRKIGGEYGATTGRPRRTGWLDALALRYAVRVNGLSGIAMTKLDVLTGFDTVKIAVGYRLDGKVLDEMPSDPEVIERCTPVYEELPGWTEKLEHLRTWDDLPPRARAYVKRVEELAGVKVVGCSVGADRGETILVENPFLAR.

GTP-binding positions include 12–18 (GDEGKGK) and 40–42 (GHT). The active-site Proton acceptor is Asp13. Positions 13 and 40 each coordinate Mg(2+). IMP contacts are provided by residues 13-16 (DEGK), 38-41 (NAGH), Thr130, Arg144, Gln225, Thr240, and Arg304. Residue His41 is the Proton donor of the active site. 300–306 (ATTGRPR) provides a ligand contact to substrate. GTP is bound by residues Arg306, 332 to 334 (KLD), and 414 to 416 (SVG).

This sequence belongs to the adenylosuccinate synthetase family. In terms of assembly, homodimer. It depends on Mg(2+) as a cofactor.

It is found in the cytoplasm. The enzyme catalyses IMP + L-aspartate + GTP = N(6)-(1,2-dicarboxyethyl)-AMP + GDP + phosphate + 2 H(+). It participates in purine metabolism; AMP biosynthesis via de novo pathway; AMP from IMP: step 1/2. Plays an important role in the de novo pathway of purine nucleotide biosynthesis. Catalyzes the first committed step in the biosynthesis of AMP from IMP. In Anaeromyxobacter dehalogenans (strain 2CP-C), this protein is Adenylosuccinate synthetase.